Here is a 301-residue protein sequence, read N- to C-terminus: NADH-cytochrome b5 reductase 3 (301 aa).

Glycine 2 carries the N-myristoyl glycine lipid modification. An FAD-binding FR-type domain is found at 40-152 (DIKYSLRLID…RGPNGLLVYQ (113 aa)). Lysine 42 is modified (N6-acetyllysine). Tyrosine 43 bears the Phosphotyrosine mark. Residues arginine 92, proline 93, tyrosine 94, valine 109, lysine 111, and phenylalanine 114 each coordinate FAD. Lysine 120 is subject to N6-acetyllysine. FAD-binding residues include lysine 126, methionine 127, serine 128, and threonine 185.

Belongs to the flavoprotein pyridine nucleotide cytochrome reductase family. As to quaternary structure, component of a complex composed of cytochrome b5, NADH-cytochrome b5 reductase (CYB5R3) and MTARC2. Interacts with MTLN; the interaction is required to maintain cellular lipid composition and leads to stimulation of mitochondrial respiratory complex I activity. Requires FAD as cofactor.

The protein localises to the endoplasmic reticulum membrane. It localises to the mitochondrion outer membrane. The enzyme catalyses 2 Fe(III)-[cytochrome b5] + NADH = 2 Fe(II)-[cytochrome b5] + NAD(+) + H(+). In terms of biological role, catalyzes the reduction of two molecules of cytochrome b5 using NADH as the electron donor. The polypeptide is NADH-cytochrome b5 reductase 3 (CYB5R3) (Macaca fascicularis (Crab-eating macaque)).